A 335-amino-acid polypeptide reads, in one-letter code: Glucokinase (335 aa).

An ATP-binding site is contributed by 11–16 (ADIGGT).

It belongs to the bacterial glucokinase family.

The protein resides in the cytoplasm. It catalyses the reaction D-glucose + ATP = D-glucose 6-phosphate + ADP + H(+). The protein is Glucokinase of Stenotrophomonas maltophilia (strain K279a).